A 64-amino-acid chain; its full sequence is Metallothionein (64 aa).

Belongs to the metallothionein superfamily. Type 4 family.

Metallothioneins have a high content of cysteine residues that bind various heavy metals. This chain is Metallothionein, found in Sterechinus neumayeri (Antarctic sea urchin).